Here is a 186-residue protein sequence, read N- to C-terminus: MKTAQELRVGNVVMIGTDAMVVLKAEYSRSGRNSSVVKMKFKNLLTGAPNEGVFKADDKFDVVILDKKECTYSYFADPMYVFMDTEYNQYEVEAEFMGDALNYLEESMPCEVVFYEGKALSVAMPNSLVREIIYTEPAVKGDTSSGKVLKNAKLATGYELQVPLFCNTGDKIEIDTRTGEYRSRAN.

Belongs to the elongation factor P family.

Its subcellular location is the cytoplasm. The protein operates within protein biosynthesis; polypeptide chain elongation. Functionally, involved in peptide bond synthesis. Stimulates efficient translation and peptide-bond synthesis on native or reconstituted 70S ribosomes in vitro. Probably functions indirectly by altering the affinity of the ribosome for aminoacyl-tRNA, thus increasing their reactivity as acceptors for peptidyl transferase. The sequence is that of Elongation factor P from Polynucleobacter asymbioticus (strain DSM 18221 / CIP 109841 / QLW-P1DMWA-1) (Polynucleobacter necessarius subsp. asymbioticus).